The chain runs to 20 residues: SVAVAGAVIEGASLTFNVLQ.

Residues 3–12 are plays an important role in the hemolytic activity; the sequence is AVAGAVIEGA. The interval 11 to 20 is N-terminal region; it reads GASLTFNVLQ.

Belongs to the actinoporin family. Sea anemone subfamily. As to quaternary structure, octamer or nonamer in membranes. Monomer in the soluble state.

It localises to the secreted. The protein resides in the nematocyst. The protein localises to the target cell membrane. Its function is as follows. Pore-forming protein that forms cations-selective hydrophilic pores of around 1 nm and causes cardiac stimulation and cytolysis. Pore formation is a multi-step process that involves specific recognition of membrane sphingomyelin (but neither cholesterol nor phosphatidylcholine) using aromatic rich region and adjacent phosphocholine (POC) binding site, firm binding to the membrane (mainly driven by hydrophobic interactions) accompanied by the transfer of the N-terminal region to the lipid-water interface and finally pore formation after oligomerization of monomers. Cytolytic effects include red blood cells hemolysis, platelet aggregation and lysis, cytotoxic and cytostatic effects on fibroblasts. Lethality in mammals has been ascribed to severe vasospasm of coronary vessels, cardiac arrhythmia, and inotropic effects. This chain is Equinatoxin-1, found in Actinia equina (Beadlet anemone).